Reading from the N-terminus, the 94-residue chain is DNA-directed RNA polymerase subunit Rpo11 (94 aa).

Belongs to the archaeal Rpo11/eukaryotic RPB11/RPC19 RNA polymerase subunit family. In terms of assembly, part of the RNA polymerase complex.

It is found in the cytoplasm. It catalyses the reaction RNA(n) + a ribonucleoside 5'-triphosphate = RNA(n+1) + diphosphate. Its function is as follows. DNA-dependent RNA polymerase (RNAP) catalyzes the transcription of DNA into RNA using the four ribonucleoside triphosphates as substrates. In Thermococcus kodakarensis (strain ATCC BAA-918 / JCM 12380 / KOD1) (Pyrococcus kodakaraensis (strain KOD1)), this protein is DNA-directed RNA polymerase subunit Rpo11.